A 217-amino-acid polypeptide reads, in one-letter code: Adenylate kinase (217 aa).

12-17 provides a ligand contact to ATP; it reads GAGKGS. The NMP stretch occupies residues 32 to 61; it reads STGDMFRTHIKGSTPLGLEAKKYTDQGLLV. Residues Thr-33, Arg-38, 59-61, 87-90, and Gln-94 each bind AMP; these read LLV and GYPR. The interval 128–165 is LID; sequence GRRTCPVCGAIYHVDNYPPKVAGICDNDGATLVQRKDD. Arg-129 contacts ATP. Positions 132 and 135 each coordinate Zn(2+). 138–139 lines the ATP pocket; it reads IY. Zn(2+)-binding residues include Cys-152 and Asp-155. AMP contacts are provided by Arg-162 and Arg-173. Gln-201 lines the ATP pocket.

This sequence belongs to the adenylate kinase family. Monomer.

Its subcellular location is the cytoplasm. It catalyses the reaction AMP + ATP = 2 ADP. Its pathway is purine metabolism; AMP biosynthesis via salvage pathway; AMP from ADP: step 1/1. Its function is as follows. Catalyzes the reversible transfer of the terminal phosphate group between ATP and AMP. Plays an important role in cellular energy homeostasis and in adenine nucleotide metabolism. This is Adenylate kinase from Acholeplasma laidlawii (strain PG-8A).